A 291-amino-acid chain; its full sequence is Probable prolyl 4-hydroxylase 12 (291 aa).

At 1 to 156 (MACLSRIFLI…GEEPSSVLHE (156 aa)) the chain is on the cytoplasmic side. The Fe2OG dioxygenase domain maps to 125–239 (NGGSIKVRSY…LLVATKLIYA (115 aa)). 2 residues coordinate Fe cation: Lys142 and Asp144. A helical; Signal-anchor for type II membrane protein transmembrane segment spans residues 157 to 173 (SLLATVVLYLSNTTQGG). Residues 174-291 (ELLFPNSEMK…GTCRKSCNAC (118 aa)) lie on the Lumenal side of the membrane. An N-linked (GlcNAc...) asparagine glycan is attached at Asn211. His220 provides a ligand contact to Fe cation. The ShKT domain maps to 251–291 (CSDEDENCGRWAKLGECKKNPVYMIGSPDYYGTCRKSCNAC). 3 cysteine pairs are disulfide-bonded: Cys251-Cys291, Cys258-Cys284, and Cys267-Cys288.

Belongs to the P4HA family. Fe(2+) serves as cofactor. L-ascorbate is required as a cofactor.

Its subcellular location is the endoplasmic reticulum membrane. It catalyses the reaction L-prolyl-[collagen] + 2-oxoglutarate + O2 = trans-4-hydroxy-L-prolyl-[collagen] + succinate + CO2. In terms of biological role, catalyzes the post-translational formation of 4-hydroxyproline in -Xaa-Pro-Gly- sequences in proline-rich peptide sequences of plant glycoproteins and other proteins. Hydroxyprolines are important constituent of many plant cell wall glycoproteins such as extensins, hydroxyproline-rich glycoproteins, lectins and arabinogalactan proteins. The polypeptide is Probable prolyl 4-hydroxylase 12 (Arabidopsis thaliana (Mouse-ear cress)).